The chain runs to 278 residues: uncharacterized protein (278 aa).

The disordered stretch occupies residues 251–278; it reads TLSENKKQKSSSTSPETDSDMSEFFGDN.

This is an uncharacterized protein from Aedes pseudoscutellaris reovirus (isolate France) (ApRV).